The primary structure comprises 1051 residues: Protein transport protein Sec16B (1051 aa).

Over residues 1-23 (MEPWVPQTQGRTTGPSRDTNRGL) the composition is skewed to polar residues. Positions 1 to 109 (MEPWVPQTQG…PYQRYHTPTP (109 aa)) are disordered. Residues 39–63 (DKYHQWQDAHKNSKSQQDLRDDHQQ) are compositionally biased toward basic and acidic residues. Residues 64 to 77 (SHSVSRSGEWSQPV) show a composition bias toward polar residues. Phosphoserine is present on residues S70 and S137. A disordered region spans residues 157 to 203 (EKHNGTFGANSDTQFQFTSKNPYRDSPASVSGQEQPGEFFPESEAQK). Positions 163–177 (FGANSDTQFQFTSKN) are enriched in polar residues. 3 positions are modified to phosphoserine: S182, S185, and S245. Residues 263–708 (APMRFYVPHV…KHKDLEQNRT (446 aa)) form a central conserved domain (CCD); required for localization to endoplasmic reticulum exit sites region. Residues 703–715 (LEQNRTGAPRDPD) are compositionally biased toward basic and acidic residues. Disordered regions lie at residues 703–754 (LEQN…LWST), 798–820 (SGAS…EDML), and 850–1051 (TPAA…TQPC). Polar residues predominate over residues 737–754 (GHQNYSEDSEYSSTLWST). Positions 798–809 (SGASGSSVAVTG) are enriched in low complexity. Position 850 is a phosphothreonine (T850). Residues S860, S863, S866, S874, and S875 each carry the phosphoserine modification. A compositionally biased stretch (basic and acidic residues) spans 877–897 (GADKPSHPDASQKGKLGDGKN). Low complexity predominate over residues 900 to 920 (SSGFGWFSWFRSKPASSVSTS). Positions 921–932 (GDEDSSDSSDSE) are enriched in acidic residues. A compositionally biased stretch (low complexity) spans 936 to 947 (RASSPHHASPGL). Positions 984-993 (EGMGIGGFSG) are enriched in gly residues. Over residues 1022-1037 (NPSQVPQLPTASSLNR) the composition is skewed to polar residues.

It belongs to the SEC16 family. As to quaternary structure, SEC16A and SEC16B are each present in multiple copies in a heteromeric complex. Interacts with TFG. Interacts with SEC13. Liver.

The protein resides in the endoplasmic reticulum membrane. Its subcellular location is the golgi apparatus membrane. Plays a role in the organization of the endoplasmic reticulum exit sites (ERES), also known as transitional endoplasmic reticulum (tER). Required for secretory cargo traffic from the endoplasmic reticulum to the Golgi apparatus. Involved in peroxisome biogenesis. Regulates the transport of peroxisomal biogenesis factors PEX3 and PEX16 from the ER to peroxisomes. In Mus musculus (Mouse), this protein is Protein transport protein Sec16B (Sec16b).